A 197-amino-acid chain; its full sequence is MKVLQEKILNEGKVLSGDVLKVDAFLNHQIDPVLMQEIGKEFAKRFKEENITKIVTIESSGIAPAVMAALELGVKVIFARKRKSLTLQDNMYVANVYSFTKQETNEISLSRNHIDESDRVLIIDDFLANGQAALGLMSLVEQAGASIAGIGIVIEKAFQDGGKKLREQGVRVESLAEIASLGNGTVTFVQHETAEVK.

2 residues coordinate xanthine: L20 and N27. 5-phospho-alpha-D-ribose 1-diphosphate is bound at residue 128 to 132 (ANGQA). Residue K156 participates in xanthine binding.

This sequence belongs to the purine/pyrimidine phosphoribosyltransferase family. Xpt subfamily. As to quaternary structure, homodimer.

Its subcellular location is the cytoplasm. It catalyses the reaction XMP + diphosphate = xanthine + 5-phospho-alpha-D-ribose 1-diphosphate. It functions in the pathway purine metabolism; XMP biosynthesis via salvage pathway; XMP from xanthine: step 1/1. Functionally, converts the preformed base xanthine, a product of nucleic acid breakdown, to xanthosine 5'-monophosphate (XMP), so it can be reused for RNA or DNA synthesis. This chain is Xanthine phosphoribosyltransferase, found in Bacillus thuringiensis (strain Al Hakam).